Reading from the N-terminus, the 311-residue chain is Aspartate carbamoyltransferase catalytic subunit (311 aa).

Carbamoyl phosphate contacts are provided by R58 and T59. K86 provides a ligand contact to L-aspartate. Carbamoyl phosphate is bound by residues R108, H136, and Q139. 2 residues coordinate L-aspartate: R169 and R223. Carbamoyl phosphate is bound by residues G264 and P265.

The protein belongs to the aspartate/ornithine carbamoyltransferase superfamily. ATCase family. As to quaternary structure, heterododecamer (2C3:3R2) of six catalytic PyrB chains organized as two trimers (C3), and six regulatory PyrI chains organized as three dimers (R2).

The catalysed reaction is carbamoyl phosphate + L-aspartate = N-carbamoyl-L-aspartate + phosphate + H(+). It functions in the pathway pyrimidine metabolism; UMP biosynthesis via de novo pathway; (S)-dihydroorotate from bicarbonate: step 2/3. Its function is as follows. Catalyzes the condensation of carbamoyl phosphate and aspartate to form carbamoyl aspartate and inorganic phosphate, the committed step in the de novo pyrimidine nucleotide biosynthesis pathway. This chain is Aspartate carbamoyltransferase catalytic subunit, found in Acidiphilium cryptum (strain JF-5).